The following is a 313-amino-acid chain: Heterogeneous nuclear ribonucleoproteins C1/C2 (313 aa).

At A2 the chain carries N-acetylalanine. Residues K8, K50, K89, and K94 each participate in a glycyl lysine isopeptide (Lys-Gly) (interchain with G-Cter in SUMO2) cross-link. An RRM domain is found at 16–87; it reads SRVFIGNLNT…QVLDINLAAE (72 aa). S113, S115, and S121 each carry phosphoserine. Disordered regions lie at residues 139-191 and 219-313; these read YPAR…KLKG and EKEQ…EDDS. The short motif at 155–161 is the Nuclear localization signal element; that stretch reads PSKRQRV. Phosphoserine occurs at positions 162 and 166. The span at 175–186 shows a compositional bias: low complexity; sequence SKSGQRGSSSKS. K176 is modified (N6-acetyllysine; alternate). A Glycyl lysine isopeptide (Lys-Gly) (interchain with G-Cter in SUMO2); alternate cross-link involves residue K176. The stretch at 191–226 forms a coiled coil; that stretch reads GDDLQAIKKELTQIKQKVDSLLESLEKIEKEQSKQA. Residue K224 forms a Glycyl lysine isopeptide (Lys-Gly) (interchain with G-Cter in SUMO2) linkage. Phosphoserine is present on residues S229, S231, and S232. K237 participates in a covalent cross-link: Glycyl lysine isopeptide (Lys-Gly) (interchain with G-Cter in SUMO2). K240 is covalently cross-linked (Glycyl lysine isopeptide (Lys-Gly) (interchain with G-Cter in SUMO2); alternate). A Glycyl lysine isopeptide (Lys-Gly) (interchain with G-Cter in SUMO1); alternate cross-link involves residue K240. A phosphoserine mark is found at S241, S246, S247, and S249. Basic and acidic residues predominate over residues 250 to 261; the sequence is VKKDETNVKMES. Residues K251 and K252 each participate in a glycyl lysine isopeptide (Lys-Gly) (interchain with G-Cter in SUMO2) cross-link. K258 is covalently cross-linked (Glycyl lysine isopeptide (Lys-Gly) (interchain with G-Cter in SUMO2); alternate). K258 is covalently cross-linked (Glycyl lysine isopeptide (Lys-Gly) (interchain with G-Cter in SUMO); alternate). Residues S261 and S268 each carry the phosphoserine modification. Over residues 263 to 284 the composition is skewed to acidic residues; the sequence is AGADDSAEEGDLLDDDDNEDRG. Basic and acidic residues predominate over residues 285 to 294; sequence DDQLELKDDE. Residues 295–313 are compositionally biased toward acidic residues; sequence KEPEEGEDDRDSANGEDDS. 2 positions are modified to phosphoserine: S306 and S313.

Belongs to the RRM HNRPC family. RALY subfamily. In terms of assembly, tetramer composed of 3 copies of isoform C1 and 1 copy of isoform C2. Assembly of 3 tetramers with bound pre-mRNA gives rise to a 19S complex that interacts with HNRNPA2B1 tetramers. Component of the 40S hnRNP particle. Identified in the spliceosome C complex. Interacts with IGF2BP1. Interacts with DHX9; this interaction is direct, enhanced probably by their concomitant binding to RNA and mediates the attachment to actin filaments. Interacts with PPIA/CYPA. Post-translationally, phosphorylated on Ser-268 and Ser-306 in resting cells. In terms of processing, sumoylated. Sumoylation reduces affinity for mRNA. Ubiquitinated and degraded after nucleo-cytoplasmic transport by YWHAE.

It is found in the nucleus. Its function is as follows. Binds pre-mRNA and nucleates the assembly of 40S hnRNP particles. Interacts with poly-U tracts in the 3'-UTR or 5'-UTR of mRNA and modulates the stability and the level of translation of bound mRNA molecules. Single HNRNPC tetramers bind 230-240 nucleotides. Trimers of HNRNPC tetramers bind 700 nucleotides. May play a role in the early steps of spliceosome assembly and pre-mRNA splicing. N6-methyladenosine (m6A) has been shown to alter the local structure in mRNAs and long non-coding RNAs (lncRNAs) via a mechanism named 'm(6)A-switch', facilitating binding of HNRNPC, leading to regulation of mRNA splicing. The sequence is that of Heterogeneous nuclear ribonucleoproteins C1/C2 (Hnrnpc) from Mus musculus (Mouse).